The primary structure comprises 136 residues: Transcription antitermination protein NusB (136 aa).

It belongs to the NusB family.

Functionally, involved in transcription antitermination. Required for transcription of ribosomal RNA (rRNA) genes. Binds specifically to the boxA antiterminator sequence of the ribosomal RNA (rrn) operons. The chain is Transcription antitermination protein NusB from Salinispora arenicola (strain CNS-205).